The sequence spans 594 residues: Elongation factor 4 (594 aa).

Residues 2 to 184 form the tr-type G domain; it reads KNIRNFSIIA…TIVAKVPAPE (183 aa). GTP-binding positions include 14 to 19 and 131 to 134; these read DHGKST and NKID.

The protein belongs to the TRAFAC class translation factor GTPase superfamily. Classic translation factor GTPase family. LepA subfamily.

It localises to the cell inner membrane. It catalyses the reaction GTP + H2O = GDP + phosphate + H(+). Functionally, required for accurate and efficient protein synthesis under certain stress conditions. May act as a fidelity factor of the translation reaction, by catalyzing a one-codon backward translocation of tRNAs on improperly translocated ribosomes. Back-translocation proceeds from a post-translocation (POST) complex to a pre-translocation (PRE) complex, thus giving elongation factor G a second chance to translocate the tRNAs correctly. Binds to ribosomes in a GTP-dependent manner. The chain is Elongation factor 4 from Francisella tularensis subsp. holarctica (strain FTNF002-00 / FTA).